We begin with the raw amino-acid sequence, 859 residues long: Bifunctional heparan sulfate N-deacetylase/N-sulfotransferase 1 (859 aa).

The Cytoplasmic portion of the chain corresponds to 1 to 13; the sequence is MIITPYLNPRLVK. Residues 14 to 34 traverse the membrane as a helical; Signal-anchor for type II membrane protein segment; sequence PLKWLAIIILLYFLYFSLFSI. The tract at residues 34–575 is heparan sulfate N-deacetylase 1; it reads INKKPGKPRK…PRHQAILPPS (542 aa). At 35–859 the chain is on the lumenal side; the sequence is NKKPGKPRKP…WLEEAVRIRV (825 aa). N50, N74, N210, N262, N378, and N429 each carry an N-linked (GlcNAc...) asparagine glycan. The segment at 576–859 is heparan sulfate N-sulfotransferase 1; that stretch reads MSCSKKSLPD…WLEEAVRIRV (284 aa). The active-site For sulfotransferase activity is the K593. Residue 593–597 participates in 3'-phosphoadenylyl sulfate binding; sequence KTGST. N-linked (GlcNAc...) asparagine glycosylation is found at N608 and N643. 3'-phosphoadenylyl sulfate is bound at residue S687. N-linked (GlcNAc...) asparagine glycosylation is present at N715. Residues C796 and C805 are joined by a disulfide bond. 810–814 is a 3'-phosphoadenylyl sulfate binding site; sequence KGRKY.

The protein belongs to the sulfotransferase 1 family. NDST subfamily. In terms of assembly, monomer.

The protein resides in the golgi apparatus membrane. It carries out the reaction alpha-D-glucosaminyl-[heparan sulfate](n) + 3'-phosphoadenylyl sulfate = N-sulfo-alpha-D-glucosaminyl-[heparan sulfate](n) + adenosine 3',5'-bisphosphate + 2 H(+). Its pathway is glycan metabolism; heparan sulfate biosynthesis. It functions in the pathway glycan metabolism; heparin biosynthesis. Its function is as follows. Essential bifunctional enzyme that catalyzes both the N-deacetylation and the N-sulfation of glucosamine (GlcNAc) of the glycosaminoglycan in heparan sulfate. Modifies the GlcNAc-GlcA disaccharide repeating sugar backbone to make N-sulfated heparosan, a prerequisite substrate for later modifications in heparin biosynthesis. In Caenorhabditis briggsae, this protein is Bifunctional heparan sulfate N-deacetylase/N-sulfotransferase 1 (hst-1).